The chain runs to 136 residues: Histone H3.2 (136 aa).

The disordered stretch occupies residues Met1–Tyr42. Residue Lys5 is modified to N6,N6,N6-trimethyllysine; alternate. N6,N6-dimethyllysine; alternate is present on Lys5. N6-methyllysine; alternate is present on residues Lys5 and Lys10. Lys10 carries the N6-acetyllysine; alternate modification. Position 11 is a phosphoserine (Ser11). At Lys15 the chain carries N6,N6-dimethyllysine; alternate. N6-acetyllysine; alternate occurs at positions 15, 19, 24, 28, and 37. Lys19, Lys24, Lys28, and Lys37 each carry N6-methyllysine; alternate. Residues Lys28 and Lys37 each carry the N6,N6,N6-trimethyllysine; alternate modification. An N6,N6-dimethyllysine; alternate mark is found at Lys28 and Lys37. N6-acetyllysine occurs at positions 57 and 65. An N6,N6,N6-trimethyllysine; alternate modification is found at Lys80. Residue Lys80 is modified to N6,N6-dimethyllysine; alternate. Lys80 carries the post-translational modification N6-methyllysine; alternate.

It belongs to the histone H3 family. As to quaternary structure, the nucleosome is a histone octamer containing two molecules each of H2A, H2B, H3 and H4 assembled in one H3-H4 heterotetramer and two H2A-H2B heterodimers. The octamer wraps approximately 147 bp of DNA. Post-translationally, phosphorylated to form H3S10ph. H3S10ph promotes subsequent H3K14ac formation and is required for transcriptional activation through TBP recruitment to the promoters. In terms of processing, mono-, di- and trimethylated by the COMPASS complex to form H3K4me1/2/3. H3K4me activates gene expression by regulating transcription elongation and plays a role in telomere length maintenance. H3K4me enrichment correlates with transcription levels, and occurs in a 5' to 3' gradient with H3K4me3 enrichment at the 5'-end of genes, shifting to H3K4me2 and then H3K4me1. Methylated by SET2 to form H3K36me. H3K36me represses gene expression. Methylated by DOT1 to form H3K79me. H3K79me is required for association of SIR proteins with telomeric regions and for telomeric silencing. The COMPASS-mediated formation of H3K4me2/3 and the DOT1-mediated formation of H3K79me require H2BK123ub1. Acetylation of histone H3 leads to transcriptional activation. H3K14ac formation by GCN5 is promoted by H3S10ph. H3K14ac can also be formed by ESA1. H3K56ac formation occurs predominantly in newly synthesized H3 molecules during G1, S and G2/M of the cell cycle and may be involved in DNA repair.

It localises to the nucleus. The protein resides in the chromosome. Core component of nucleosome. Nucleosomes wrap and compact DNA into chromatin, limiting DNA accessibility to the cellular machineries which require DNA as a template. Histones thereby play a central role in transcription regulation, DNA repair, DNA replication and chromosomal stability. DNA accessibility is regulated via a complex set of post-translational modifications of histones, also called histone code, and nucleosome remodeling. This chain is Histone H3.2 (HHT2), found in Mycosarcoma maydis (Corn smut fungus).